Here is a 637-residue protein sequence, read N- to C-terminus: Penicillin-binding protein 1A (637 aa).

The segment at 62–224 (LIADLGSERR…NQYDPYSHPE (163 aa)) is transglycosylase. The active-site Proton donor; for transglycosylase activity is the Glu-91. A transpeptidase region spans residues 298 to 612 (EVYTNVDSKV…RLTPIVGDGF (315 aa)). Ser-371 functions as the Acyl-ester intermediate; for transpeptidase activity in the catalytic mechanism.

In the N-terminal section; belongs to the glycosyltransferase 51 family. It in the C-terminal section; belongs to the transpeptidase family.

Its subcellular location is the secreted. The catalysed reaction is [GlcNAc-(1-&gt;4)-Mur2Ac(oyl-L-Ala-gamma-D-Glu-L-Lys-D-Ala-D-Ala)](n)-di-trans,octa-cis-undecaprenyl diphosphate + beta-D-GlcNAc-(1-&gt;4)-Mur2Ac(oyl-L-Ala-gamma-D-Glu-L-Lys-D-Ala-D-Ala)-di-trans,octa-cis-undecaprenyl diphosphate = [GlcNAc-(1-&gt;4)-Mur2Ac(oyl-L-Ala-gamma-D-Glu-L-Lys-D-Ala-D-Ala)](n+1)-di-trans,octa-cis-undecaprenyl diphosphate + di-trans,octa-cis-undecaprenyl diphosphate + H(+). It carries out the reaction Preferential cleavage: (Ac)2-L-Lys-D-Ala-|-D-Ala. Also transpeptidation of peptidyl-alanyl moieties that are N-acyl substituents of D-alanine.. Its pathway is cell wall biogenesis; peptidoglycan biosynthesis. In terms of biological role, cell wall formation. The chain is Penicillin-binding protein 1A (ponA) from Streptococcus oralis.